An 818-amino-acid chain; its full sequence is Exchange factor for Arf-6 (818 aa).

Disordered regions lie at residues 92–123 (AQKLSRLPVPVSTSQIERRGSLARKTSEESSP), 137–168 (MESTDVEESEEETVMMTTDEKENQKKPNENDD), 208–291 (NHHH…GVSN), and 326–383 (RTTP…VGGE). The span at 107-119 (IERRGSLARKTSE) shows a compositional bias: basic and acidic residues. Residues 140–149 (TDVEESEEET) are compositionally biased toward acidic residues. Positions 154–165 (TDEKENQKKPNE) are enriched in basic and acidic residues. Composition is skewed to polar residues over residues 213–223 (YNSSPQISTLS) and 255–269 (MSNNSHQQSFRSPEN). The segment covering 326-347 (RTTPNTAASNSSASASPSLHAT) has biased composition (low complexity). The 177-residue stretch at 356–532 (GVSLRSAESS…KTLFQSIKDN (177 aa)) folds into the SEC7 domain. Polar residues predominate over residues 361-380 (SAESSNLNQTAVPSTSTNSV). The PH domain occupies 569 to 681 (VEYYSGFLMR…WCEKINFVAA (113 aa)). Polar residues predominate over residues 782–799 (TMNIMMTPTRRQQQNQKP). Positions 782-818 (TMNIMMTPTRRQQQNQKPVVSEDRLSYTDAVNGAAAH) are disordered.

In terms of assembly, interacts (via short N-terminal region) with microtubule-associated proteins tac-1 and zyg-8.

It is found in the cytoplasm. Its subcellular location is the cell cortex. It localises to the cell membrane. Functionally, guanine nucleotide exchange factor for arf-6. Involved in response to injury in mechanosensory neurons. Inhibits axon regrowth via microtubule dynamics, possibly by inducing axonal microtubule catastrophes. Limits microtubule growth near the cellular cortex of early embryonic cells. In Caenorhabditis elegans, this protein is Exchange factor for Arf-6.